Reading from the N-terminus, the 306-residue chain is tRNA dimethylallyltransferase (306 aa).

An ATP-binding site is contributed by Gly12–Thr19. A substrate-binding site is contributed by Thr14–Thr19. Interaction with substrate tRNA regions lie at residues Asp37–Leu40, Gln161–Arg165, and Arg242–Arg247.

It belongs to the IPP transferase family. As to quaternary structure, monomer. The cofactor is Mg(2+).

It carries out the reaction adenosine(37) in tRNA + dimethylallyl diphosphate = N(6)-dimethylallyladenosine(37) in tRNA + diphosphate. In terms of biological role, catalyzes the transfer of a dimethylallyl group onto the adenine at position 37 in tRNAs that read codons beginning with uridine, leading to the formation of N6-(dimethylallyl)adenosine (i(6)A). The sequence is that of tRNA dimethylallyltransferase from Pseudoalteromonas translucida (strain TAC 125).